The following is a 393-amino-acid chain: Erythronate-4-phosphate dehydrogenase (393 aa).

The substrate site is built by Ser-57 and Thr-79. An NAD(+)-binding site is contributed by Asp-159. Residue Arg-229 is part of the active site. Asp-253 is an NAD(+) binding site. The active site involves Glu-258. The active-site Proton donor is the His-275. Gly-278 lines the NAD(+) pocket. Tyr-279 lines the substrate pocket.

Belongs to the D-isomer specific 2-hydroxyacid dehydrogenase family. PdxB subfamily. As to quaternary structure, homodimer.

Its subcellular location is the cytoplasm. The enzyme catalyses 4-phospho-D-erythronate + NAD(+) = (R)-3-hydroxy-2-oxo-4-phosphooxybutanoate + NADH + H(+). It functions in the pathway cofactor biosynthesis; pyridoxine 5'-phosphate biosynthesis; pyridoxine 5'-phosphate from D-erythrose 4-phosphate: step 2/5. Catalyzes the oxidation of erythronate-4-phosphate to 3-hydroxy-2-oxo-4-phosphonooxybutanoate. The chain is Erythronate-4-phosphate dehydrogenase from Colwellia psychrerythraea (strain 34H / ATCC BAA-681) (Vibrio psychroerythus).